We begin with the raw amino-acid sequence, 340 residues long: Centromere protein N (340 aa).

Residues serine 227 and serine 236 each carry the phosphoserine modification.

The protein belongs to the CENP-N/CHL4 family. Component of the CENPA-NAC complex, at least composed of CENPA, CENPC, CENPH, CENPM, CENPN, CENPT and CENPU. The CENPA-NAC complex interacts with the CENPA-CAD complex, composed of CENPI, CENPK, CENPL, CENPO, CENPP, CENPQ, CENPR and CENPS. Interacts directly with CENPA. Identified in a centromere complex containing histones H2A, H2B and H4, and at least CENPA, CENPB, CENPC, CENPT, CENPN, HJURP, SUPT16H, SSRP1 and RSF1.

The protein localises to the nucleus. The protein resides in the chromosome. It is found in the centromere. Its subcellular location is the kinetochore. Its function is as follows. Component of the CENPA-NAC (nucleosome-associated) complex, a complex that plays a central role in assembly of kinetochore proteins, mitotic progression and chromosome segregation. The CENPA-NAC complex recruits the CENPA-CAD (nucleosome distal) complex and may be involved in incorporation of newly synthesized CENPA into centromeres. CENPN is the first protein to bind specifically to CENPA nucleosomes and the direct binding of CENPA nucleosomes by CENPN is required for centromere assembly. Required for chromosome congression and efficiently align the chromosomes on a metaphase plate. The sequence is that of Centromere protein N (Cenpn) from Rattus norvegicus (Rat).